Here is a 375-residue protein sequence, read N- to C-terminus: Patatin-1-Kuras 2 (375 aa).

A signal peptide spans 1 to 11 (MILATTSSTFA). The 199-residue stretch at 20 to 218 (LSIDGGGIKG…TVADPALLSV (199 aa)) folds into the PNPLA domain. Positions 24–29 (GGGIKG) match the GXGXXG motif. The GXSXG motif lies at 63 to 67 (GTSTG). Residue Ser-65 is the Nucleophile of the active site. An N-linked (GlcNAc...) asparagine glycan is attached at Asn-103. Asp-204 functions as the Proton acceptor in the catalytic mechanism. A DGA/G motif is present at residues 204–206 (DGA). Positions 349–373 (ETYEEALKRFAKLLSDRKKLRANKA) form a coiled coil.

This sequence belongs to the patatin family. In terms of tissue distribution, tuber.

It localises to the vacuole. Functionally, probable lipolytic acyl hydrolase (LAH), an activity which is thought to be involved in the response of tubers to pathogens. This Solanum tuberosum (Potato) protein is Patatin-1-Kuras 2 (pat1-k2).